A 555-amino-acid polypeptide reads, in one-letter code: Potassium-transporting ATPase potassium-binding subunit (555 aa).

A run of 10 helical transmembrane segments spans residues 2-22, 60-80, 130-150, 173-193, 246-266, 278-298, 374-394, 412-432, 483-503, and 525-545; these read IWVA…PTGI, QYAL…YFIF, IGIT…VMAF, VFLP…VPQT, MSNI…PFTY, ILFV…TTSE, AGFV…GLMV, LIAV…ALAL, LVMF…AASL, and GIFI…MLVL.

The protein belongs to the KdpA family. As to quaternary structure, the system is composed of three essential subunits: KdpA, KdpB and KdpC.

It localises to the cell membrane. In terms of biological role, part of the high-affinity ATP-driven potassium transport (or Kdp) system, which catalyzes the hydrolysis of ATP coupled with the electrogenic transport of potassium into the cytoplasm. This subunit binds the extracellular potassium ions and delivers the ions to the membrane domain of KdpB through an intramembrane tunnel. The chain is Potassium-transporting ATPase potassium-binding subunit from Bacillus cereus (strain AH820).